The following is a 208-amino-acid chain: NADH-quinone oxidoreductase subunit I 2 (208 aa).

4Fe-4S ferredoxin-type domains are found at residues 79–109 (ILVE…IEGK) and 119–148 (SVFN…QTDI). 8 residues coordinate [4Fe-4S] cluster: cysteine 88, cysteine 91, cysteine 94, cysteine 98, cysteine 128, cysteine 131, cysteine 134, and cysteine 138.

Belongs to the complex I 23 kDa subunit family. As to quaternary structure, NDH-1 is composed of 14 different subunits. Subunits NuoA, H, J, K, L, M, N constitute the membrane sector of the complex. [4Fe-4S] cluster is required as a cofactor.

The protein resides in the cell inner membrane. The enzyme catalyses a quinone + NADH + 5 H(+)(in) = a quinol + NAD(+) + 4 H(+)(out). Its function is as follows. NDH-1 shuttles electrons from NADH, via FMN and iron-sulfur (Fe-S) centers, to quinones in the respiratory chain. The immediate electron acceptor for the enzyme in this species is believed to be ubiquinone. Couples the redox reaction to proton translocation (for every two electrons transferred, four hydrogen ions are translocated across the cytoplasmic membrane), and thus conserves the redox energy in a proton gradient. The sequence is that of NADH-quinone oxidoreductase subunit I 2 from Aquifex aeolicus (strain VF5).